Here is a 153-residue protein sequence, read N- to C-terminus: Ribosomal RNA large subunit methyltransferase H (153 aa).

Residues Leu-70, Gly-102, and 121–126 (LSRMTF) contribute to the S-adenosyl-L-methionine site.

This sequence belongs to the RNA methyltransferase RlmH family. In terms of assembly, homodimer.

Its subcellular location is the cytoplasm. It carries out the reaction pseudouridine(1915) in 23S rRNA + S-adenosyl-L-methionine = N(3)-methylpseudouridine(1915) in 23S rRNA + S-adenosyl-L-homocysteine + H(+). In terms of biological role, specifically methylates the pseudouridine at position 1915 (m3Psi1915) in 23S rRNA. This is Ribosomal RNA large subunit methyltransferase H from Geobacter sulfurreducens (strain ATCC 51573 / DSM 12127 / PCA).